We begin with the raw amino-acid sequence, 1019 residues long: Collagen alpha-1(VI) chain (1019 aa).

A signal peptide spans 1 to 19; that stretch reads MGLHDSFLALLLLLGGAWA. Residues 37–233 enclose the VWFA 1 domain; sequence DLFFVLDTSE…LDVEETINNI (197 aa). The N-linked (GlcNAc...) asparagine glycan is linked to N212. The disordered stretch occupies residues 248-588; sequence FECHPPRGPP…GPPGPVGPPG (341 aa). A compositionally biased stretch (pro residues) spans 253 to 262; sequence PRGPPGPPGD. Composition is skewed to basic and acidic residues over residues 299–332 and 370–380; these read KGDK…DGMK and GKGEPGEDGKP. A compositionally biased stretch (low complexity) spans 427–436; it reads ERGPPGSPGD. The Cell attachment site motif lies at 476-478; it reads RGD. N514 is a glycosylation site (N-linked (GlcNAc...) asparagine). Residues 529–531 carry the Cell attachment site motif; sequence RGD. N535 is a glycosylation site (N-linked (GlcNAc...) asparagine). Pro residues predominate over residues 577 to 588; it reads RPGPPGPVGPPG. VWFA domains are found at residues 613–800 and 824–1012; these read DLLF…LQNI and DIML…YQTV. N-linked (GlcNAc...) asparagine glycosylation is found at N799 and N887.

Belongs to the type VI collagen family. Trimers composed of three different chains: alpha 1(VI), alpha 2(VI), and alpha 3(VI). Prolines at the third position of the tripeptide repeating unit (G-X-Y) are hydroxylated in some or all of the chains.

The protein localises to the secreted. Its subcellular location is the extracellular space. It localises to the extracellular matrix. Functionally, collagen VI acts as a cell-binding protein. This chain is Collagen alpha-1(VI) chain (COL6A1), found in Gallus gallus (Chicken).